Reading from the N-terminus, the 229-residue chain is ATP synthase subunit a (229 aa).

The next 6 helical transmembrane spans lie at 16–36, 81–101, 110–130, 142–162, 175–195, and 196–216; these read YAHV…GAAA, YIPF…LGMI, NMNT…FQGV, FMGP…VSHI, VMMG…IGVP, and IPFY…FTLL.

This sequence belongs to the ATPase A chain family. In terms of assembly, F-type ATPases have 2 components, CF(1) - the catalytic core - and CF(0) - the membrane proton channel. CF(1) has five subunits: alpha(3), beta(3), gamma(1), delta(1), epsilon(1). CF(0) has three main subunits: a(1), b(2) and c(9-12). The alpha and beta chains form an alternating ring which encloses part of the gamma chain. CF(1) is attached to CF(0) by a central stalk formed by the gamma and epsilon chains, while a peripheral stalk is formed by the delta and b chains.

The protein resides in the cell inner membrane. Its function is as follows. Key component of the proton channel; it plays a direct role in the translocation of protons across the membrane. The protein is ATP synthase subunit a of Bdellovibrio bacteriovorus (strain ATCC 15356 / DSM 50701 / NCIMB 9529 / HD100).